The primary structure comprises 127 residues: Glycine cleavage system H protein (127 aa).

Residues 27 to 109 (TVRVGITHIA…YGEGWLYEVK (83 aa)) enclose the Lipoyl-binding domain. Lys-68 is modified (N6-lipoyllysine).

The protein belongs to the GcvH family. The glycine cleavage system is composed of four proteins: P, T, L and H. (R)-lipoate serves as cofactor.

In terms of biological role, the glycine cleavage system catalyzes the degradation of glycine. The H protein shuttles the methylamine group of glycine from the P protein to the T protein. The polypeptide is Glycine cleavage system H protein (Corynebacterium jeikeium (strain K411)).